The following is a 220-amino-acid chain: Ribosomal RNA small subunit methyltransferase J (220 aa).

Residues 55–56, 71–72, and Asp-123 each bind S-adenosyl-L-methionine; these read RD and ER.

The protein belongs to the methyltransferase superfamily. RsmJ family.

It localises to the cytoplasm. It carries out the reaction guanosine(1516) in 16S rRNA + S-adenosyl-L-methionine = N(2)-methylguanosine(1516) in 16S rRNA + S-adenosyl-L-homocysteine + H(+). In terms of biological role, specifically methylates the guanosine in position 1516 of 16S rRNA. The polypeptide is Ribosomal RNA small subunit methyltransferase J (Rhodopseudomonas palustris (strain BisB5)).